A 484-amino-acid chain; its full sequence is Vanillin dehydrogenase (484 aa).

NADP(+)-binding positions include 156–157, 180–183, and 234–235; these read WN, KPAS, and GS. NAD(+) is bound by residues Lys-180 and 234–239; that span reads GSTPVG. Glu-258 (proton acceptor) is an active-site residue. Leu-259 contributes to the NADP(+) binding site. The Nucleophile role is filled by Cys-292. Positions 339 and 386 each coordinate NAD(+). Glu-386 contacts NADP(+).

The protein belongs to the aldehyde dehydrogenase family. Exists as a homodimer, homotrimer and homotetramer.

It catalyses the reaction vanillin + NAD(+) + H2O = vanillate + NADH + 2 H(+). The enzyme catalyses vanillin + NADP(+) + H2O = vanillate + NADPH + 2 H(+). It carries out the reaction 3,4-dihydroxybenzaldehyde + NAD(+) + H2O = 3,4-dihydroxybenzoate + NADH + 2 H(+). The catalysed reaction is 3,4-dihydroxybenzaldehyde + NADP(+) + H2O = 3,4-dihydroxybenzoate + NADPH + 2 H(+). It catalyses the reaction 4-hydroxybenzaldehyde + NAD(+) + H2O = 4-hydroxybenzoate + NADH + 2 H(+). The enzyme catalyses 4-hydroxybenzaldehyde + NADP(+) + H2O = 4-hydroxybenzoate + NADPH + 2 H(+). Catalyzes oxidation of vanillin to vanillate. Also oxidizes 3,4-dihydroxybenzaldehyde and 4-hydroxybenzaldehyde significantly. Other aromatic aldehyde substrates in the order of decreasing activity include 3-hydroxybenzaldehyde, 4-nitrobenzaldehyde, terephthalaldehyde, 2,4-dichlorobenzaldehyde, benzaldehyde and 3-phenylpropanal. Low activity with phthalaldehyde, cinnamaldehyde and syringaldehyde. No activity with phenylacetaldehyde, formaldehyde or aldehyde. Active with both NAD(+) and NADP(+). Involved in the degradation pathway of lignin-derived aromatic compounds of plant cell walls. Catalyzes the conversion of vanillin to vanillate due to toxicity of vanillin to the cells. This is Vanillin dehydrogenase from Corynebacterium glutamicum (strain ATCC 13032 / DSM 20300 / JCM 1318 / BCRC 11384 / CCUG 27702 / LMG 3730 / NBRC 12168 / NCIMB 10025 / NRRL B-2784 / 534).